The sequence spans 172 residues: S-ribosylhomocysteine lyase (172 aa).

Residues histidine 54, histidine 58, and cysteine 128 each contribute to the Fe cation site.

This sequence belongs to the LuxS family. Homodimer. It depends on Fe cation as a cofactor.

The catalysed reaction is S-(5-deoxy-D-ribos-5-yl)-L-homocysteine = (S)-4,5-dihydroxypentane-2,3-dione + L-homocysteine. Functionally, involved in the synthesis of autoinducer 2 (AI-2) which is secreted by bacteria and is used to communicate both the cell density and the metabolic potential of the environment. The regulation of gene expression in response to changes in cell density is called quorum sensing. Catalyzes the transformation of S-ribosylhomocysteine (RHC) to homocysteine (HC) and 4,5-dihydroxy-2,3-pentadione (DPD). The sequence is that of S-ribosylhomocysteine lyase from Aliivibrio salmonicida (strain LFI1238) (Vibrio salmonicida (strain LFI1238)).